Here is a 138-residue protein sequence, read N- to C-terminus: uncharacterized protein (138 aa).

The region spanning 3–72 (LYSISKAAEK…LEDINEFVKD (70 aa)) is the HTH merR-type domain. The H-T-H motif DNA-binding region spans 6-25 (ISKAAEKTSISSYTLRYYEK).

This is an uncharacterized protein from Bacillus subtilis (strain 168).